The chain runs to 275 residues: Large ribosomal subunit protein uL2 (275 aa).

Residues 223–275 (VAMNPVDHPHGGGEGRTGEGRVPVSPWGTPAKGYRTRNNKRTDNMIVRRRHSK) are disordered. Positions 229–241 (DHPHGGGEGRTGE) are enriched in basic and acidic residues.

This sequence belongs to the universal ribosomal protein uL2 family. In terms of assembly, part of the 50S ribosomal subunit. Forms a bridge to the 30S subunit in the 70S ribosome.

One of the primary rRNA binding proteins. Required for association of the 30S and 50S subunits to form the 70S ribosome, for tRNA binding and peptide bond formation. It has been suggested to have peptidyltransferase activity; this is somewhat controversial. Makes several contacts with the 16S rRNA in the 70S ribosome. This chain is Large ribosomal subunit protein uL2, found in Laribacter hongkongensis (strain HLHK9).